Reading from the N-terminus, the 254-residue chain is 5-oxoprolinase subunit A (254 aa).

Belongs to the LamB/PxpA family. In terms of assembly, forms a complex composed of PxpA, PxpB and PxpC.

The enzyme catalyses 5-oxo-L-proline + ATP + 2 H2O = L-glutamate + ADP + phosphate + H(+). In terms of biological role, catalyzes the cleavage of 5-oxoproline to form L-glutamate coupled to the hydrolysis of ATP to ADP and inorganic phosphate. This chain is 5-oxoprolinase subunit A, found in Acinetobacter baumannii (strain ACICU).